The following is a 387-amino-acid chain: Type 2 DNA topoisomerase 6 subunit A (387 aa).

One can recognise a Topo IIA-type catalytic domain in the interval Glu-12–Lys-160. The active-site O-(5'-phospho-DNA)-tyrosine intermediate is the Tyr-106. Residues Glu-207 and Asp-259 each contribute to the Mg(2+) site.

The protein belongs to the TOP6A family. In terms of assembly, homodimer. Heterotetramer of two Top6A and two Top6B chains. Mg(2+) is required as a cofactor.

The enzyme catalyses ATP-dependent breakage, passage and rejoining of double-stranded DNA.. Relaxes both positive and negative superturns and exhibits a strong decatenase activity. This chain is Type 2 DNA topoisomerase 6 subunit A, found in Hyperthermus butylicus (strain DSM 5456 / JCM 9403 / PLM1-5).